We begin with the raw amino-acid sequence, 73 residues long: Gas vesicle protein A (73 aa).

This sequence belongs to the gas vesicle GvpA family. In terms of assembly, the gas vesicle shell is 2 nm thick and consists of a single layer of this protein. It forms helical ribs nearly perpendicular to the long axis of the vesicle.

The protein localises to the gas vesicle shell. Its function is as follows. Gas vesicles are hollow, gas filled proteinaceous nanostructures found in some microorganisms. During planktonic growth they allow positioning of the organism at a favorable depth for light or nutrient acquisition. GvpA forms the protein shell. The polypeptide is Gas vesicle protein A (Nostoc punctiforme (strain ATCC 29133 / PCC 73102)).